The following is a 529-amino-acid chain: Type I restriction enzyme StySJI methylase subunit (529 aa).

S-adenosyl-L-methionine-binding positions include 148 to 153 (QYFTPR), 178 to 180 (TAG), and Glu216. Residues 405–444 (YGEDPHGLSPREEGEWSFNAEESEVADSEENKNTDQHQAT) are disordered. Over residues 407–418 (EDPHGLSPREEG) the composition is skewed to basic and acidic residues.

It belongs to the N(4)/N(6)-methyltransferase family. The type I restriction/modification system is composed of three polypeptides R, M and S; the restriction enzyme has stoichiometry R(2)M(2)S(1) while the methyltransferase is M(2)S(1).

It catalyses the reaction a 2'-deoxyadenosine in DNA + S-adenosyl-L-methionine = an N(6)-methyl-2'-deoxyadenosine in DNA + S-adenosyl-L-homocysteine + H(+). Its function is as follows. The subtype gamma methyltransferase (M) subunit of a type I restriction enzyme. The M and S subunits together form a methyltransferase (MTase) that methylates two adenine residues of the sequence 5'-GAGN(6)GTRC-3'. In the presence of the R subunit the complex can also act as an endonuclease, binding to the same target sequence but cutting the DNA some distance from this site. Whether the DNA is cut or modified depends on the methylation state of the target sequence. When the target site is unmodified, the DNA is cut. When the target site is hemimethylated, the complex acts as a maintenance MTase modifying the DNA so that both strands become methylated. After locating a non-methylated recognition site, the enzyme complex serves as a molecular motor that translocates DNA in an ATP-dependent manner until a collision occurs that triggers cleavage. The chain is Type I restriction enzyme StySJI methylase subunit from Salmonella typhimurium (strain LT2 / SGSC1412 / ATCC 700720).